A 500-amino-acid chain; its full sequence is Probable cytosol aminopeptidase (500 aa).

Residues K265 and D270 each coordinate Mn(2+). K277 is an active-site residue. The Mn(2+) site is built by D288, D347, and E349. R351 is an active-site residue.

It belongs to the peptidase M17 family. It depends on Mn(2+) as a cofactor.

It is found in the cytoplasm. It catalyses the reaction Release of an N-terminal amino acid, Xaa-|-Yaa-, in which Xaa is preferably Leu, but may be other amino acids including Pro although not Arg or Lys, and Yaa may be Pro. Amino acid amides and methyl esters are also readily hydrolyzed, but rates on arylamides are exceedingly low.. It carries out the reaction Release of an N-terminal amino acid, preferentially leucine, but not glutamic or aspartic acids.. Presumably involved in the processing and regular turnover of intracellular proteins. Catalyzes the removal of unsubstituted N-terminal amino acids from various peptides. This Rickettsia typhi (strain ATCC VR-144 / Wilmington) protein is Probable cytosol aminopeptidase.